A 226-amino-acid polypeptide reads, in one-letter code: ATP synthase subunit a (226 aa).

The next 5 membrane-spanning stretches (helical) occupy residues 17 to 37, 78 to 98, 104 to 124, 175 to 195, and 201 to 221; these read FLFV…AKLA, LVAT…IPGF, NINF…FEGI, LFVW…GFAL, and FLQT…AVLL.

Belongs to the ATPase A chain family. F-type ATPases have 2 components, CF(1) - the catalytic core - and CF(0) - the membrane proton channel. CF(1) has five subunits: alpha(3), beta(3), gamma(1), delta(1), epsilon(1). CF(0) has three main subunits: a(1), b(2) and c(9-12). The alpha and beta chains form an alternating ring which encloses part of the gamma chain. CF(1) is attached to CF(0) by a central stalk formed by the gamma and epsilon chains, while a peripheral stalk is formed by the delta and b chains.

It localises to the cell inner membrane. In terms of biological role, key component of the proton channel; it plays a direct role in the translocation of protons across the membrane. In Nitratiruptor sp. (strain SB155-2), this protein is ATP synthase subunit a.